A 110-amino-acid chain; its full sequence is uncharacterized protein (110 aa).

May play a regulatory role in sulfomenaquinone (SMK) biosynthesis. This is an uncharacterized protein from Mycobacterium bovis (strain ATCC BAA-935 / AF2122/97).